The chain runs to 342 residues: Dihydroorotate dehydrogenase (quinone) (342 aa).

FMN contacts are provided by residues 61-65 (AGLDK) and threonine 85. Substrate is bound at residue lysine 65. 110 to 114 (NRMGF) provides a ligand contact to substrate. 2 residues coordinate FMN: asparagine 138 and asparagine 171. Residue asparagine 171 coordinates substrate. Serine 174 functions as the Nucleophile in the catalytic mechanism. Asparagine 176 contacts substrate. FMN is bound by residues lysine 216 and threonine 244. Residue 245-246 (NT) participates in substrate binding. Residues glycine 267, glycine 296, and 317-318 (YS) contribute to the FMN site.

The protein belongs to the dihydroorotate dehydrogenase family. Type 2 subfamily. In terms of assembly, monomer. FMN is required as a cofactor.

The protein resides in the cell membrane. It carries out the reaction (S)-dihydroorotate + a quinone = orotate + a quinol. It functions in the pathway pyrimidine metabolism; UMP biosynthesis via de novo pathway; orotate from (S)-dihydroorotate (quinone route): step 1/1. Its function is as follows. Catalyzes the conversion of dihydroorotate to orotate with quinone as electron acceptor. The chain is Dihydroorotate dehydrogenase (quinone) from Pseudomonas aeruginosa (strain UCBPP-PA14).